The chain runs to 854 residues: Zinc finger protein 341 (854 aa).

Residues 53 to 76 (FLCGKCKKQFNSLPAFMTHKREQC) form a C2H2-type 1; atypical zinc finger. A disordered region spans residues 152 to 217 (DQPMPQGPPP…GRPNPGGNGV (66 aa)). Over residues 163 to 176 (QSSLNMHSVPSYLT) the composition is skewed to polar residues. The span at 177–210 (QPPPPPPPPPPLPPPPPPQPPPPPPQSLGPPGRP) shows a compositional bias: pro residues. 2 C2H2-type zinc fingers span residues 322-344 (LKCS…IRSH) and 350-372 (FQCI…MQTH). The interval 399-434 (SRQEDEESTGLGQPLPGAPQPQALSTAGEEEGDKPE) is disordered. Over residues 408–422 (GLGQPLPGAPQPQAL) the composition is skewed to low complexity. C2H2-type zinc fingers lie at residues 445 to 467 (YLCQ…MTQH), 473 to 497 (YKCV…IKSH), 503 to 525 (YRCH…QYSH), 540 to 564 (YKCV…TATH), 566 to 588 (FPCP…LPTH), 594 to 616 (FKCQ…AHIH), 622 to 644 (YKCS…MLIH), 650 to 677 (YKCP…ILSH), and 683 to 705 (HKCA…QRAH). Residues 731-763 (CRLGPQKDKDLQTRRPPQRRAAPRSCGSGGRKV) are disordered.

The protein belongs to the krueppel C2H2-type zinc-finger protein family. In terms of assembly, binds DNA and to the STAT3 promoter.

Its subcellular location is the nucleus. In terms of biological role, transcriptional activator of STAT3 involved in the regulation of immune homeostasis. Also able to activate STAT1 transcription. The sequence is that of Zinc finger protein 341 (ZNF341) from Homo sapiens (Human).